The chain runs to 502 residues: Putative ZDHHC-type palmitoyltransferase 3 (502 aa).

Residues 1–80 form a disordered region; the sequence is MVNNNNKNNK…ESTNENNKKL (80 aa). Residues 10–30 are compositionally biased toward basic and acidic residues; the sequence is KINDRENEENEKNKKKDKIYE. Positions 31 to 52 are enriched in low complexity; that stretch reads NKIGINENNNENNNYQNENFIY. N-linked (GlcNAc...) asparagine glycosylation is present at Asn-58. The segment covering 59–73 has biased composition (acidic residues); the sequence is DTQEGDISEIQEEST. 2 helical membrane-spanning segments follow: residues 104 to 124 and 134 to 154; these read FFIV…IKLV and LEIS…YNLY. The interval 200–281 is disordered; the sequence is IANDDPISSS…NNNNNNNKNQ (82 aa). The span at 203–212 shows a compositional bias: low complexity; sequence DDPISSSSDF. The segment covering 213–222 has biased composition (acidic residues); that stretch reads SDSDDDDQDE. A compositionally biased stretch (low complexity) spans 248 to 280; the sequence is NSNNNNSNNNNNNNKNRNRNNNNNNNNNNNNKN. Asn-252 and Asn-280 each carry an N-linked (GlcNAc...) asparagine glycan. The region spanning 299–349 is the DHHC domain; that stretch reads KFCITCGLYREPRSFHCSTCNNCVENFDHHCVWIGNCIGRRNYREFFYFIT. Cys-329 serves as the catalytic S-palmitoyl cysteine intermediate. Residues 344-364 traverse the membrane as a helical segment; the sequence is FFYFITTTLIYALYLLSMSIV. Asn-371, Asn-388, and Asn-393 each carry an N-linked (GlcNAc...) asparagine glycan. The chain crosses the membrane as a helical span at residues 419-439; the sequence is GLCIFIIIFGFIMSLLLGFLV. Asn-449, Asn-483, and Asn-494 each carry an N-linked (GlcNAc...) asparagine glycan.

It belongs to the DHHC palmitoyltransferase family.

The protein resides in the membrane. It catalyses the reaction L-cysteinyl-[protein] + hexadecanoyl-CoA = S-hexadecanoyl-L-cysteinyl-[protein] + CoA. This is Putative ZDHHC-type palmitoyltransferase 3 from Dictyostelium discoideum (Social amoeba).